Reading from the N-terminus, the 178-residue chain is MNPFHDLEPGPNVPEVVYALIEIPKGSRNKYELDKETGLLKLDRVLYTPFHYPVDYGIIPRTWYEDGDPFDIMVIMREPTYPLTIIEARPIGLFKMIDSGDKDYKVLAVPVEDPYFKDWKDISDVPKAFLDEIAHFFKRYKELEGKEIIVEGWEGAEAAKREILRAIEMYKEKFGKKE.

Substrate is bound by residues K30, R44, and Y56. 3 residues coordinate Mg(2+): D66, D71, and D103. Y140 lines the substrate pocket.

The protein belongs to the PPase family. In terms of assembly, homohexamer. Requires Mg(2+) as cofactor.

It localises to the cytoplasm. The enzyme catalyses diphosphate + H2O = 2 phosphate + H(+). Its function is as follows. Catalyzes the hydrolysis of inorganic pyrophosphate (PPi) forming two phosphate ions. This is Inorganic pyrophosphatase from Pyrococcus horikoshii (strain ATCC 700860 / DSM 12428 / JCM 9974 / NBRC 100139 / OT-3).